Consider the following 363-residue polypeptide: S-adenosylmethionine:tRNA ribosyltransferase-isomerase (363 aa).

This sequence belongs to the QueA family. Monomer.

Its subcellular location is the cytoplasm. It catalyses the reaction 7-aminomethyl-7-carbaguanosine(34) in tRNA + S-adenosyl-L-methionine = epoxyqueuosine(34) in tRNA + adenine + L-methionine + 2 H(+). The protein operates within tRNA modification; tRNA-queuosine biosynthesis. Its function is as follows. Transfers and isomerizes the ribose moiety from AdoMet to the 7-aminomethyl group of 7-deazaguanine (preQ1-tRNA) to give epoxyqueuosine (oQ-tRNA). The sequence is that of S-adenosylmethionine:tRNA ribosyltransferase-isomerase from Haemophilus influenzae (strain 86-028NP).